A 692-amino-acid chain; its full sequence is Elongation factor G 2 (692 aa).

Residues 8–283 form the tr-type G domain; it reads KDVRNIGIMA…GVVNYLPSPL (276 aa). GTP-binding positions include 17–24, 81–85, and 135–138; these read AHIDAGKT, DTPGH, and NKMD.

This sequence belongs to the TRAFAC class translation factor GTPase superfamily. Classic translation factor GTPase family. EF-G/EF-2 subfamily.

It is found in the cytoplasm. Its function is as follows. Catalyzes the GTP-dependent ribosomal translocation step during translation elongation. During this step, the ribosome changes from the pre-translocational (PRE) to the post-translocational (POST) state as the newly formed A-site-bound peptidyl-tRNA and P-site-bound deacylated tRNA move to the P and E sites, respectively. Catalyzes the coordinated movement of the two tRNA molecules, the mRNA and conformational changes in the ribosome. In Desulfotalea psychrophila (strain LSv54 / DSM 12343), this protein is Elongation factor G 2.